The primary structure comprises 907 residues: Eukaryotic translation initiation factor 4 gamma 2 (907 aa).

Met1 carries the post-translational modification N-acetylmethionine. The interval 1-71 is disordered; the sequence is MESAIAEGGA…SAANNSANEK (71 aa). Ser11 carries the post-translational modification Phosphoserine. Residues 78-308 enclose the MIF4G domain; it reads FRKVRGILNK…QDTVELREHH (231 aa). At Thr89 the chain carries Phosphothreonine. At Arg360 the chain carries Omega-N-methylarginine. Ser395 carries the post-translational modification Phosphoserine. Position 431 is an N6-methyllysine (Lys431). Phosphoserine is present on Ser443. The disordered stretch occupies residues 498–541; it reads PPSAQPPRTQTPPLGQTPQLGLKTNPPLIQEKPAKTSKKPPPSK. Residues 503–516 are compositionally biased toward polar residues; it reads PPRTQTPPLGQTPQ. Arg505 is subject to Omega-N-methylarginine. Thr508 and Thr514 each carry phosphothreonine. The region spanning 543–666 is the MI domain; that stretch reads ELLKLTETVV…SISELAQPLE (124 aa). Lys575 participates in a covalent cross-link: Glycyl lysine isopeptide (Lys-Gly) (interchain with G-Cter in SUMO2). The W2 domain maps to 720 to 904; that stretch reads EGKGLSFLFP…ETAEEEESEE (185 aa). Ser902 carries the post-translational modification Phosphoserine.

This sequence belongs to the eukaryotic initiation factor 4G family. Interacts with the serine/threonine protein kinases MKNK1 and MKNK2. Binds EIF4A and EIF3. Interacts with MIF4GD. Interacts with DAZAP2. Phosphorylation; hyperphosphorylated during mitosis.

In terms of biological role, appears to play a role in the switch from cap-dependent to IRES-mediated translation during mitosis, apoptosis and viral infection. Cleaved by some caspases and viral proteases. The polypeptide is Eukaryotic translation initiation factor 4 gamma 2 (Oryctolagus cuniculus (Rabbit)).